The primary structure comprises 822 residues: MQDKNLVNVNLTKEMKASFIDYAMSVIVARALPDVRDGLKPVHRRILYGMNELGVTPDKPHKKSARITGDVMGKYHPHGDSSIYEAMVRMAQWWSYRYMLVDGHGNFGSMDGDSAAAQRYTEARMSKIALEMLRDINKNTVDFVDNYDANEREPLVLPARFPNLLVNGATGIAVGMATNIPPHNLGETIDAVKLVMDNPEVTTKDLMEVLPGPDFPTGALVMGKSGIHKAYETGKGSIVLRSRTEIETTKTGRERIVVTEFPYMVNKTKVHEHIVRLVQEKRIEGITAVRDESNREGVRFVIEVKRDASANVILNNLFKMTQMQTNFGFNMLAIQNGIPKILSLRQILDAYIEHQKEVVVRRTRFDKEKAEARAHILEGLLIALDHIDEVIRIIRASETDAEAQAELMSKFKLSERQSQAILDMRLRRLTGLERDKIQSEYDDLLALIADLADILAKPERVSQIIKDELDEVKRKFSDKRRTELMVGQVLSLEDEDLIEESDVLITLSNRGYIKRLDQDEFTAQKRGGRGVQGTGVKDDDFVRELVSTSTHDHLLFFTNKGRVYRLKGYEIPEYGRTAKGLPVVNLLKLDEDESIQTVINVESDRSDDAYLFFTTRHGIVKRTSVKEFANIRQNGLKALNLKDEDELINVLLAEGDMDIIIGTKFGYAVRFNQSAVRGMSRIATGVKGVNLREGDTVVGASLITDQDEVLIITEKGYGKRTVATEYPTKGRGGKGMQTAKITEKNGLLAGLMTVQGDEDLMIITDTGVMIRTNLANISQTGRATMGVKVMRLDQDAQIVTFTTVAVAEKEEVGTENETEGEA.

The 466-residue stretch at 32–497 folds into the Topo IIA-type catalytic domain; the sequence is LPDVRDGLKP…QVLSLEDEDL (466 aa). Y120 functions as the O-(5'-phospho-DNA)-tyrosine intermediate in the catalytic mechanism. Residues 524 to 530 carry the GyrA-box motif; it reads QKRGGRG.

This sequence belongs to the type II topoisomerase GyrA/ParC subunit family. As to quaternary structure, heterotetramer, composed of two GyrA and two GyrB chains. In the heterotetramer, GyrA contains the active site tyrosine that forms a transient covalent intermediate with DNA, while GyrB binds cofactors and catalyzes ATP hydrolysis.

The protein localises to the cytoplasm. It catalyses the reaction ATP-dependent breakage, passage and rejoining of double-stranded DNA.. Its function is as follows. A type II topoisomerase that negatively supercoils closed circular double-stranded (ds) DNA in an ATP-dependent manner to modulate DNA topology and maintain chromosomes in an underwound state. Negative supercoiling favors strand separation, and DNA replication, transcription, recombination and repair, all of which involve strand separation. Also able to catalyze the interconversion of other topological isomers of dsDNA rings, including catenanes and knotted rings. Type II topoisomerases break and join 2 DNA strands simultaneously in an ATP-dependent manner. This chain is DNA gyrase subunit A, found in Streptococcus pneumoniae (strain ATCC BAA-255 / R6).